The sequence spans 416 residues: Histidine--tRNA ligase (416 aa).

It belongs to the class-II aminoacyl-tRNA synthetase family. In terms of assembly, homodimer.

It localises to the cytoplasm. It carries out the reaction tRNA(His) + L-histidine + ATP = L-histidyl-tRNA(His) + AMP + diphosphate + H(+). This Clostridium kluyveri (strain NBRC 12016) protein is Histidine--tRNA ligase.